The following is a 1220-amino-acid chain: Pesticidal crystal protein Cry5Ac (1220 aa).

Positions 1194–1220 (PLPTDDQNSEGNTAFSTNSDTSMNNNQ) are disordered. Positions 1198-1220 (DDQNSEGNTAFSTNSDTSMNNNQ) are enriched in polar residues.

The protein belongs to the delta endotoxin family.

Functionally, promotes colloidosmotic lysis by binding to the midgut epithelial cells of hymenopteran species. In Bacillus thuringiensis, this protein is Pesticidal crystal protein Cry5Ac (cry5Ac).